The sequence spans 393 residues: Protein TsgA (393 aa).

12 consecutive transmembrane segments (helical) span residues 11–31 (WISF…GMVM), 51–71 (FLNA…EIVP), 78–98 (FGFL…SLAL), 101–121 (AAMF…TFLV), 134–154 (LLFT…IAAF), 162–182 (WYWV…LTFG), 206–226 (IGVL…LGFI), 245–265 (TLVS…SFIL), 273–293 (ILTV…TGTP), 297–317 (AWSI…IITL), 332–352 (FVLT…GPIV), and 361–381 (LLTA…LGFV).

This sequence belongs to the major facilitator superfamily. TsgA family.

Its subcellular location is the cell inner membrane. The protein is Protein TsgA of Escherichia coli O6:K15:H31 (strain 536 / UPEC).